The sequence spans 396 residues: Calsequestrin-1 (396 aa).

A signal peptide spans 1–34 (MSATDRMGPRAVPGLRLALLLLLVLGTPKSGVQG). Tyr43 carries the post-translational modification Phosphotyrosine. The residue at position 81 (Ser81) is a Phosphoserine. Thr124 carries the phosphothreonine modification. Ser216 carries the phosphoserine modification. Asn350 is a glycosylation site (N-linked (GlcNAc...) asparagine).

Belongs to the calsequestrin family. As to quaternary structure, monomer; increases in response to a depletion of intracellular calcium. Homodimer. Homotetramer and homopolymer. Can form linear homooligomers. Ca(2+) ions promote oligomerization. Interacts (via C-terminal end and preferentially with the monomeric form) with STIM1; this interaction increases in response to a depletion of intracellular calcium, decreases both STIM1 aggregation and clustering, interaction of STIM1 with ORAI1 and store-operated Ca(2+) entry (SOCE) activity. Interacts with ASPH and TRDN. Post-translationally, N-glycosylated. As to expression, expressed in myoblasts (at protein level).

It is found in the endoplasmic reticulum. It localises to the sarcoplasmic reticulum. The protein localises to the sarcoplasmic reticulum lumen. Its subcellular location is the sarcoplasmic reticulum membrane. The protein resides in the mitochondrion matrix. Functionally, calsequestrin is a high-capacity, moderate affinity, calcium-binding protein and thus acts as an internal calcium store in muscle. Calcium ions are bound by clusters of acidic residues at the protein surface, often at the interface between subunits. Can bind around 80 Ca(2+) ions. Regulates the release of lumenal Ca(2+) via the calcium release channel RYR1; this plays an important role in triggering muscle contraction. Negatively regulates store-operated Ca(2+) entry (SOCE) activity. The chain is Calsequestrin-1 (CASQ1) from Homo sapiens (Human).